We begin with the raw amino-acid sequence, 660 residues long: Bifunctional polymyxin resistance protein ArnA (660 aa).

Residues 1 to 304 (MKTVVFAYHD…TLGLVQGSRL (304 aa)) are formyltransferase ArnAFT. Residue 86 to 88 (HLI) coordinates (6R)-10-formyltetrahydrofolate. The active-site Proton donor; for formyltransferase activity is the His104. (6R)-10-formyltetrahydrofolate-binding positions include Arg114 and 136–140 (VKRAD). The interval 314–660 (RRTRVLILGV…RTVDLTDKPS (347 aa)) is dehydrogenase ArnADH. Residues Asp347 and 368-369 (DI) each bind NAD(+). UDP-alpha-D-glucuronate is bound by residues Ala393, Tyr398, and 432–433 (TS). The active-site Proton acceptor; for decarboxylase activity is Glu434. Residues Arg460, Asn492, 526–535 (KLIDGGKQKR), and Tyr613 each bind UDP-alpha-D-glucuronate. The active-site Proton donor; for decarboxylase activity is Arg619.

In the N-terminal section; belongs to the Fmt family. UDP-L-Ara4N formyltransferase subfamily. This sequence in the C-terminal section; belongs to the NAD(P)-dependent epimerase/dehydratase family. UDP-glucuronic acid decarboxylase subfamily. In terms of assembly, homohexamer, formed by a dimer of trimers.

It carries out the reaction UDP-alpha-D-glucuronate + NAD(+) = UDP-beta-L-threo-pentopyranos-4-ulose + CO2 + NADH. The catalysed reaction is UDP-4-amino-4-deoxy-beta-L-arabinose + (6R)-10-formyltetrahydrofolate = UDP-4-deoxy-4-formamido-beta-L-arabinose + (6S)-5,6,7,8-tetrahydrofolate + H(+). Its pathway is nucleotide-sugar biosynthesis; UDP-4-deoxy-4-formamido-beta-L-arabinose biosynthesis; UDP-4-deoxy-4-formamido-beta-L-arabinose from UDP-alpha-D-glucuronate: step 1/3. The protein operates within nucleotide-sugar biosynthesis; UDP-4-deoxy-4-formamido-beta-L-arabinose biosynthesis; UDP-4-deoxy-4-formamido-beta-L-arabinose from UDP-alpha-D-glucuronate: step 3/3. It participates in bacterial outer membrane biogenesis; lipopolysaccharide biosynthesis. Its function is as follows. Bifunctional enzyme that catalyzes the oxidative decarboxylation of UDP-glucuronic acid (UDP-GlcUA) to UDP-4-keto-arabinose (UDP-Ara4O) and the addition of a formyl group to UDP-4-amino-4-deoxy-L-arabinose (UDP-L-Ara4N) to form UDP-L-4-formamido-arabinose (UDP-L-Ara4FN). The modified arabinose is attached to lipid A and is required for resistance to polymyxin and cationic antimicrobial peptides. This is Bifunctional polymyxin resistance protein ArnA from Escherichia coli O1:K1 / APEC.